We begin with the raw amino-acid sequence, 183 residues long: uncharacterized protein (183 aa).

A run of 4 helical transmembrane segments spans residues 13–35, 60–82, 117–139, and 149–171; these read KALL…LTYS, LLIL…KLRF, FEPV…YAIF, and LLFY…LYLS.

The protein resides in the cell membrane. This is an uncharacterized protein from Archaeoglobus fulgidus (strain ATCC 49558 / DSM 4304 / JCM 9628 / NBRC 100126 / VC-16).